Reading from the N-terminus, the 156-residue chain is Ribosomal RNA large subunit methyltransferase H (156 aa).

S-adenosyl-L-methionine-binding positions include leucine 73, glycine 104, and 123-128 (ISSMTL).

Belongs to the RNA methyltransferase RlmH family. As to quaternary structure, homodimer.

It is found in the cytoplasm. The enzyme catalyses pseudouridine(1915) in 23S rRNA + S-adenosyl-L-methionine = N(3)-methylpseudouridine(1915) in 23S rRNA + S-adenosyl-L-homocysteine + H(+). In terms of biological role, specifically methylates the pseudouridine at position 1915 (m3Psi1915) in 23S rRNA. In Burkholderia vietnamiensis (strain G4 / LMG 22486) (Burkholderia cepacia (strain R1808)), this protein is Ribosomal RNA large subunit methyltransferase H.